A 37-amino-acid chain; its full sequence is Mu-cyrtautoxin-As1a (37 aa).

Intrachain disulfides connect C1-C15, C8-C19, C14-C35, and C26-C31.

Belongs to the neurotoxin 13 (insecticidal toxin ABC) family. 01 (Aps III) subfamily. In terms of tissue distribution, expressed by the venom gland.

The protein resides in the secreted. The recombinant mu-cyrtautoxin-As1a potently and voltage-independently blocks voltage-gated sodium channels (Nav) of insects. It acts by pluging the outer vestibule of the channel. It acts in combination with a weak (30%) voltage-independent block of insect voltage-gated calcium (Cav) channels (low-voltage and high-voltage channels). Tested on DUM neurons, it inhibits sodium currents with an IC(50) of 540 nM (and a Hill coefficient &gt;1, reflecting an incomplete block at higher concentrations). In vivo, it induces flaccid paralysis in adult Australian sheep blowfly Lucilia cuprina. It is both paralytic and lethal, when injected into lepidopteran larvae. It is a slower acting toxin, being lethal at 24 hours, but not paralytic at 1 hour post-injection. The sequence is that of Mu-cyrtautoxin-As1a from Apomastus schlingeri (Trap-door spider).